The primary structure comprises 390 residues: GTPase Obg (390 aa).

The region spanning 1–159 is the Obg domain; the sequence is MKFVDEASIL…RELLLELMLL (159 aa). Positions 127–147 are disordered; the sequence is NTRFKSSVNRTPRQKTNGTPG. Positions 129–145 are enriched in polar residues; sequence RFKSSVNRTPRQKTNGT. The OBG-type G domain maps to 160–333; it reads ADVGMLGMPN…LCWDVMTFII (174 aa). Residues 166–173, 191–195, 213–216, 283–286, and 314–316 contribute to the GTP site; these read GMPNAGKS, FTTLV, DIPG, NKID, and SAA. 2 residues coordinate Mg(2+): S173 and T193.

The protein belongs to the TRAFAC class OBG-HflX-like GTPase superfamily. OBG GTPase family. In terms of assembly, monomer. It depends on Mg(2+) as a cofactor.

It is found in the cytoplasm. Functionally, an essential GTPase which binds GTP, GDP and possibly (p)ppGpp with moderate affinity, with high nucleotide exchange rates and a fairly low GTP hydrolysis rate. Plays a role in control of the cell cycle, stress response, ribosome biogenesis and in those bacteria that undergo differentiation, in morphogenesis control. The protein is GTPase Obg of Escherichia coli (strain K12 / DH10B).